The following is an 831-amino-acid chain: Intraflagellar transport protein 88 (831 aa).

TPR repeat units follow at residues 68-101 (IFKLLRDGMSAASCKDYVTALGRIREAIKLEQKV), 120-153 (TCIWMHWAQIQALGGQPEMALSTYEKIVKTAEGA), 156-189 (AQIRFNMGNINHNLGKYNEALKNFRMAIDQASPS), 248-281 (FDPLYTVLIGYYALGVPEKMIDAYSRLIDSSILI), 492-525 (RGVHTNIAFIYYLKGDYEASARHAQIALEIDPYD), 526-559 (SFAHINLGCTYSKTNQWELSLREFLKAQEINMES), 560-593 (VQATYNAGLVYFKQQEYKTAYSCFQKVASKLPSY), 595-627 (DAIYMSADCLARMSQIDEAIQMLSNLVTMFSAV), 632-665 (PSIYIRLGELYSIAGDEGQAAHYFKEAHRLVPFS), 666-699 (LAVINWLGSHYIKNELYEQARVCFEKASRVDTTT), and 700-733 (PKWSLAVAACLRKSKQYRDAIYEYKHILKRFPTN). The interval 785 to 816 (RRNSVAAVGPGSRAGQDRFEASNNRVSSNTGD) is disordered. The segment covering 805-815 (ASNNRVSSNTG) has biased composition (polar residues).

The protein resides in the cell projection. The protein localises to the cilium. It localises to the flagellum. Its subcellular location is the cytoplasm. It is found in the cytoskeleton. The protein resides in the flagellum axoneme. The protein localises to the flagellum basal body. Its function is as follows. Component of the intraflagellar transport complex B (IFT-B) involved in flagellar assembly. The chain is Intraflagellar transport protein 88 from Giardia intestinalis (strain ATCC 50803 / WB clone C6) (Giardia lamblia).